The chain runs to 362 residues: Protein mom-2 (362 aa).

Residues 1-24 (MHINTPVLLAIIYFLVFAPKSADA) form the signal peptide. 5 disulfides stabilise this stretch: cysteine 80–cysteine 91, cysteine 129–cysteine 137, cysteine 139–cysteine 167, cysteine 217–cysteine 231, and cysteine 219–cysteine 226. N-linked (GlcNAc...) asparagine glycosylation occurs at asparagine 90. The O-palmitoleoyl serine; by mom-1 moiety is linked to residue serine 223. A disordered region spans residues 263–282 (TVRSSPSAGSSGRSERFARN). Residues 265–274 (RSSPSAGSSG) show a composition bias toward low complexity. Disulfide bonds link cysteine 304/cysteine 322, cysteine 313/cysteine 317, cysteine 321/cysteine 361, cysteine 337/cysteine 352, cysteine 339/cysteine 349, and cysteine 344/cysteine 345.

The protein belongs to the Wnt family. Palmitoleoylation is required for efficient binding to frizzled receptors. Depalmitoleoylation leads to Wnt signaling pathway inhibition. As to expression, expressed by anchor cell and vulva precursor cell descendants P5.ppa, P5.ppp, P7.paa and P7.pap. Expressed in the tail and weakly expressed in the vulva and body wall muscles.

It localises to the secreted. It is found in the extracellular space. The protein localises to the extracellular matrix. In terms of biological role, ligand for members of the frizzled family of seven transmembrane receptors. Required in embryonic development for endoderm specification and the correct positioning and orientation of the mitotic spindles and division planes in blastomere cells. Involved in cleavage axis determination. Binds to receptor tyrosine kinase cam-1. Together with wnt ligand lin-44, plays a role in controlling vulva precursor cell P7.p lineage orientation during vulva development, probably by acting as a ligand for tyrosine kinase receptor lin-18. May act redundantly with other Wnt ligands such as cwn-1 and cwn-2 to control seam cell polarity. The sequence is that of Protein mom-2 (mom-2) from Caenorhabditis elegans.